A 346-amino-acid chain; its full sequence is UDP-N-acetylenolpyruvoylglucosamine reductase (346 aa).

The FAD-binding PCMH-type domain occupies 22–194; sequence GFDVRARFAC…TSVTFRLPKV (173 aa). Arginine 170 is an active-site residue. Serine 246 serves as the catalytic Proton donor. Residue glutamate 342 is part of the active site.

It belongs to the MurB family. It depends on FAD as a cofactor.

Its subcellular location is the cytoplasm. The catalysed reaction is UDP-N-acetyl-alpha-D-muramate + NADP(+) = UDP-N-acetyl-3-O-(1-carboxyvinyl)-alpha-D-glucosamine + NADPH + H(+). The protein operates within cell wall biogenesis; peptidoglycan biosynthesis. Functionally, cell wall formation. This is UDP-N-acetylenolpyruvoylglucosamine reductase from Paraburkholderia xenovorans (strain LB400).